The sequence spans 49 residues: Defensin Tk-AMP-D2 (49 aa).

Intrachain disulfides connect cysteine 3–cysteine 49, cysteine 14–cysteine 34, cysteine 20–cysteine 43, and cysteine 24–cysteine 45.

Its function is as follows. Plant defense peptide. The polypeptide is Defensin Tk-AMP-D2 (Triticum kiharae (Wheat)).